The sequence spans 282 residues: Undecaprenyl-diphosphatase (282 aa).

5 helical membrane-spanning segments follow: residues 96-116, 123-143, 198-218, 229-249, and 260-280; these read WMVI…KDII, MWIT…AEKW, FLLA…DAFA, QLAV…AWLL, and FAAY…TGML.

It belongs to the UppP family.

It is found in the cell membrane. It carries out the reaction di-trans,octa-cis-undecaprenyl diphosphate + H2O = di-trans,octa-cis-undecaprenyl phosphate + phosphate + H(+). Its function is as follows. Catalyzes the dephosphorylation of undecaprenyl diphosphate (UPP). Confers resistance to bacitracin. The protein is Undecaprenyl-diphosphatase of Corynebacterium diphtheriae (strain ATCC 700971 / NCTC 13129 / Biotype gravis).